The following is a 596-amino-acid chain: Leucine zipper putative tumor suppressor 1 (596 aa).

Gly-2 is lipidated: N-myristoyl glycine. Disordered regions lie at residues 136–193 (AILH…SYQL) and 295–324 (YEER…SQKS). Residues 153 to 162 (PPDKPKEQEL) show a composition bias toward basic and acidic residues. Residues 178 to 190 (SMSSLPTHSTSSS) are compositionally biased toward low complexity. Residues 256-374 (ISTDECSIQE…SYEREKTSFG (119 aa)) are a coiled coil. The segment covering 295 to 310 (YEERPRRCRDELEGPE) has biased composition (basic and acidic residues).

This sequence belongs to the LZTS family. In terms of assembly, binds EEF1G, TLK2 and CDK1. Phosphorylated on serine residues. Hyperphosphorylated by the cAMP-dependent kinase PKA during cell-cycle progression. As to expression, highly expressed in testis, prostate, spleen, thymus, ovary and brain. Detected at lower levels in heart, placenta, small intestine, colon, liver, kidney, skeletal muscle and pancreas. Not detectable in primary tumors from breast and prostate and in many cancer cell lines.

The protein localises to the cytoplasm. Its subcellular location is the cell membrane. It localises to the cell projection. The protein resides in the dendritic spine. It is found in the postsynaptic density. The protein localises to the synapse. Functionally, involved in the regulation of cell growth. May stabilize the active CDC2-cyclin B1 complex and thereby contribute to the regulation of the cell cycle and the prevention of uncontrolled cell proliferation. May act as a tumor suppressor. The polypeptide is Leucine zipper putative tumor suppressor 1 (LZTS1) (Homo sapiens (Human)).